A 176-amino-acid polypeptide reads, in one-letter code: HTH-type transcriptional regulator DctR (176 aa).

The HTH luxR-type domain maps to 109–174 (VPEADVSLSR…ELVRHQHINY (66 aa)). Residues 133–152 (TEDILEKLKISLKTFYCHKH) constitute a DNA-binding region (H-T-H motif).

Its function is as follows. May act as a transcriptional regulator of dctA. This chain is HTH-type transcriptional regulator DctR (dctR), found in Escherichia coli O6:H1 (strain CFT073 / ATCC 700928 / UPEC).